The sequence spans 282 residues: NADPH-dependent 7-cyano-7-deazaguanine reductase (282 aa).

88–90 (IES) provides a ligand contact to substrate. 90-91 (SK) is an NADPH binding site. Cys-190 acts as the Thioimide intermediate in catalysis. Asp-197 functions as the Proton donor in the catalytic mechanism. 229–230 (HE) is a substrate binding site. 258-259 (RG) serves as a coordination point for NADPH.

It belongs to the GTP cyclohydrolase I family. QueF type 2 subfamily. Homodimer.

It is found in the cytoplasm. It catalyses the reaction 7-aminomethyl-7-carbaguanine + 2 NADP(+) = 7-cyano-7-deazaguanine + 2 NADPH + 3 H(+). The protein operates within tRNA modification; tRNA-queuosine biosynthesis. Catalyzes the NADPH-dependent reduction of 7-cyano-7-deazaguanine (preQ0) to 7-aminomethyl-7-deazaguanine (preQ1). The polypeptide is NADPH-dependent 7-cyano-7-deazaguanine reductase (Salmonella arizonae (strain ATCC BAA-731 / CDC346-86 / RSK2980)).